Reading from the N-terminus, the 236-residue chain is Ubiquinone biosynthesis O-methyltransferase (236 aa).

S-adenosyl-L-methionine is bound by residues arginine 36, glycine 60, aspartate 81, and leucine 123.

This sequence belongs to the methyltransferase superfamily. UbiG/COQ3 family.

It catalyses the reaction a 3-demethylubiquinol + S-adenosyl-L-methionine = a ubiquinol + S-adenosyl-L-homocysteine + H(+). The catalysed reaction is a 3-(all-trans-polyprenyl)benzene-1,2-diol + S-adenosyl-L-methionine = a 2-methoxy-6-(all-trans-polyprenyl)phenol + S-adenosyl-L-homocysteine + H(+). It functions in the pathway cofactor biosynthesis; ubiquinone biosynthesis. Its function is as follows. O-methyltransferase that catalyzes the 2 O-methylation steps in the ubiquinone biosynthetic pathway. This Rickettsia canadensis (strain McKiel) protein is Ubiquinone biosynthesis O-methyltransferase.